A 187-amino-acid polypeptide reads, in one-letter code: Elongation factor P (187 aa).

The protein belongs to the elongation factor P family.

It localises to the cytoplasm. It participates in protein biosynthesis; polypeptide chain elongation. Involved in peptide bond synthesis. Stimulates efficient translation and peptide-bond synthesis on native or reconstituted 70S ribosomes in vitro. Probably functions indirectly by altering the affinity of the ribosome for aminoacyl-tRNA, thus increasing their reactivity as acceptors for peptidyl transferase. This Ruegeria sp. (strain TM1040) (Silicibacter sp.) protein is Elongation factor P.